The following is a 24-amino-acid chain: Heat shock 70 kDa protein 4L (24 aa).

Threonine 19 carries the phosphothreonine modification.

It belongs to the heat shock protein 70 family. Homodimer. In the testis, forms a complex with p53 at 32.5 degrees Celsius which is scrotal temperature but not at 37 or 42 degrees Celsius. In terms of tissue distribution, expressed at high levels in testis and at much lower levels in brain. In testis, expressed mainly in germ cells. Widespread in brain with highest expression in cerebellum and medulla oblongata. Also expressed in renal medulla of water-restricted animals.

Its subcellular location is the cytoplasm. The protein localises to the nucleus. Possesses chaperone activity in vitro where it inhibits aggregation of citrate synthase. The chain is Heat shock 70 kDa protein 4L (Hspa4l) from Rattus norvegicus (Rat).